We begin with the raw amino-acid sequence, 177 residues long: ADP-ribosylation factor-like protein 17 (177 aa).

Residue glycine 2 is the site of N-myristoyl glycine attachment. Residues 24 to 31 (SLDTAGKT), 67 to 71 (DVGSH), and 125 to 128 (LPHS) contribute to the GTP site.

Belongs to the small GTPase superfamily. Arf family.

The protein resides in the golgi apparatus. GTP-binding protein that functions as an allosteric activator of the cholera toxin catalytic subunit, an ADP-ribosyltransferase. Involved in protein trafficking; may modulate vesicle budding and uncoating within the Golgi apparatus. In Homo sapiens (Human), this protein is ADP-ribosylation factor-like protein 17 (ARL17A).